The sequence spans 130 residues: UPF0212 protein TSIB_1358 (130 aa).

The protein belongs to the UPF0212 family.

This chain is UPF0212 protein TSIB_1358, found in Thermococcus sibiricus (strain DSM 12597 / MM 739).